A 92-amino-acid polypeptide reads, in one-letter code: Small ribosomal subunit protein uS19 (92 aa).

The protein belongs to the universal ribosomal protein uS19 family.

Protein S19 forms a complex with S13 that binds strongly to the 16S ribosomal RNA. The chain is Small ribosomal subunit protein uS19 from Nitrobacter winogradskyi (strain ATCC 25391 / DSM 10237 / CIP 104748 / NCIMB 11846 / Nb-255).